A 100-amino-acid polypeptide reads, in one-letter code: NADH-quinone oxidoreductase subunit K (100 aa).

A run of 3 helical transmembrane segments spans residues 2-22 (VPTT…MIGV), 29-49 (IMVF…LVAF), and 63-83 (FIVM…IVAI).

Belongs to the complex I subunit 4L family. As to quaternary structure, NDH-1 is composed of 15 different subunits. Subunits NuoA, H, J, K, L, M, N constitute the membrane sector of the complex.

Its subcellular location is the cell membrane. The enzyme catalyses a quinone + NADH + 5 H(+)(in) = a quinol + NAD(+) + 4 H(+)(out). NDH-1 shuttles electrons from NADH, via FMN and iron-sulfur (Fe-S) centers, to quinones in the respiratory chain. The immediate electron acceptor for the enzyme in this species is believed to be a menaquinone. Couples the redox reaction to proton translocation (for every two electrons transferred, four hydrogen ions are translocated across the cytoplasmic membrane), and thus conserves the redox energy in a proton gradient. This chain is NADH-quinone oxidoreductase subunit K, found in Deinococcus deserti (strain DSM 17065 / CIP 109153 / LMG 22923 / VCD115).